A 427-amino-acid chain; its full sequence is Adenylosuccinate synthetase (427 aa).

GTP-binding positions include 12-18 and 40-42; these read GDEGKGK and GHT. Aspartate 13 acts as the Proton acceptor in catalysis. Mg(2+) contacts are provided by aspartate 13 and glycine 40. IMP is bound by residues 13–16, 38–41, threonine 128, arginine 142, glutamine 223, threonine 238, and arginine 302; these read DEGK and NAGH. The Proton donor role is filled by histidine 41. 298 to 304 provides a ligand contact to substrate; the sequence is VTTGRAR. GTP is bound by residues arginine 304, 330–332, and 412–414; these read KLD and GVG.

It belongs to the adenylosuccinate synthetase family. Homodimer. Requires Mg(2+) as cofactor.

It is found in the cytoplasm. It catalyses the reaction IMP + L-aspartate + GTP = N(6)-(1,2-dicarboxyethyl)-AMP + GDP + phosphate + 2 H(+). It functions in the pathway purine metabolism; AMP biosynthesis via de novo pathway; AMP from IMP: step 1/2. In terms of biological role, plays an important role in the de novo pathway of purine nucleotide biosynthesis. Catalyzes the first committed step in the biosynthesis of AMP from IMP. The polypeptide is Adenylosuccinate synthetase (Frankia alni (strain DSM 45986 / CECT 9034 / ACN14a)).